The primary structure comprises 410 residues: Aspartic proteinase Asp1 (410 aa).

An N-terminal signal peptide occupies residues 1-23 (MTARLALLASLLLLLQLVPPSSA). The propeptide at 24 to 46 (VVLELHGNVYPIGHFFVTMNIGD) is removed in mature form. A Peptidase A1 domain is found at 38–392 (FFVTMNIGDP…DSERSLLGWV (355 aa)). Active-site residues include Asp-56 and Asp-257.

It belongs to the peptidase A1 family. As to expression, expressed in pollen, nucellus, ovary wall, shoot and root meristem, coleoptiles of immature seeds, and somatic embryos.

Possesses protease activity in vitro. The polypeptide is Aspartic proteinase Asp1 (ASP1) (Oryza sativa subsp. indica (Rice)).